We begin with the raw amino-acid sequence, 76 residues long: Envelope small membrane protein (76 aa).

The Virion surface portion of the chain corresponds to 1–16 (MYSFVSEETGTLIVNS). Residues 17 to 37 (VLLFFAFVVFLLVTLAILTAL) form a helical membrane-spanning segment. Residues 38–76 (RLCAYCCNIVNVSLVKPTVYVYSRVKNLNSSEGVPDLLV) lie on the Intravirion side of the membrane.

Belongs to the betacoronaviruses E protein family. Homopentamer. Interacts with membrane protein M in the budding compartment of the host cell, which is located between endoplasmic reticulum and the Golgi complex. Interacts with Nucleoprotein.

It is found in the host Golgi apparatus membrane. In terms of biological role, plays a central role in virus morphogenesis and assembly. Acts as a viroporin and self-assembles in host membranes forming pentameric protein-lipid pores that allow ion transport. Also plays a role in the induction of apoptosis. The sequence is that of Envelope small membrane protein from Rhinolophus macrotis (Big-eared horseshoe bat).